We begin with the raw amino-acid sequence, 216 residues long: Pyridoxine/pyridoxamine 5'-phosphate oxidase (216 aa).

Substrate is bound by residues 12–15 (RREY) and Lys-70. Residues 65-70 (RVVLLK), 80-81 (YT), Arg-86, Lys-87, and Gln-109 contribute to the FMN site. Substrate contacts are provided by Tyr-127 and Arg-131. Residues 144 to 145 (QS) and Trp-189 contribute to the FMN site. Residue 195–197 (RLH) coordinates substrate. Arg-199 contacts FMN.

This sequence belongs to the pyridoxamine 5'-phosphate oxidase family. In terms of assembly, homodimer. FMN serves as cofactor.

The enzyme catalyses pyridoxamine 5'-phosphate + O2 + H2O = pyridoxal 5'-phosphate + H2O2 + NH4(+). It catalyses the reaction pyridoxine 5'-phosphate + O2 = pyridoxal 5'-phosphate + H2O2. It participates in cofactor metabolism; pyridoxal 5'-phosphate salvage; pyridoxal 5'-phosphate from pyridoxamine 5'-phosphate: step 1/1. Its pathway is cofactor metabolism; pyridoxal 5'-phosphate salvage; pyridoxal 5'-phosphate from pyridoxine 5'-phosphate: step 1/1. Functionally, catalyzes the oxidation of either pyridoxine 5'-phosphate (PNP) or pyridoxamine 5'-phosphate (PMP) into pyridoxal 5'-phosphate (PLP). This is Pyridoxine/pyridoxamine 5'-phosphate oxidase from Blochmanniella pennsylvanica (strain BPEN).